Here is a 318-residue protein sequence, read N- to C-terminus: Thioredoxin reductase (318 aa).

36-43 contacts FAD; sequence TGLQQGGQ. The cysteines at positions 136 and 139 are disulfide-linked. 286 to 295 lines the FAD pocket; that stretch reads DVMDHNYRQA.

It belongs to the class-II pyridine nucleotide-disulfide oxidoreductase family. Homodimer. Requires FAD as cofactor.

Its subcellular location is the cytoplasm. It catalyses the reaction [thioredoxin]-dithiol + NADP(+) = [thioredoxin]-disulfide + NADPH + H(+). The polypeptide is Thioredoxin reductase (trxB) (Haemophilus influenzae (strain ATCC 51907 / DSM 11121 / KW20 / Rd)).